A 256-amino-acid chain; its full sequence is DNA repair protein RecO (256 aa).

The protein belongs to the RecO family.

In terms of biological role, involved in DNA repair and RecF pathway recombination. The chain is DNA repair protein RecO from Rhizobium leguminosarum bv. trifolii (strain WSM2304).